The following is a 73-amino-acid chain: Large ribosomal subunit protein bL31 (73 aa).

Positions 16, 18, 37, and 40 each coordinate Zn(2+).

This sequence belongs to the bacterial ribosomal protein bL31 family. Type A subfamily. In terms of assembly, part of the 50S ribosomal subunit. Zn(2+) serves as cofactor.

In terms of biological role, binds the 23S rRNA. The sequence is that of Large ribosomal subunit protein bL31 from Blochmanniella floridana.